Reading from the N-terminus, the 355-residue chain is Serine endoprotease DegS (355 aa).

Topologically, residues 1-4 (MFVK) are cytoplasmic. A helical membrane pass occupies residues 5 to 27 (LLRSVAIGLIVGAILLVAMPSLR). Residues 28-355 (SLNPLSTPQF…VTIQEYPATN (328 aa)) are Periplasmic-facing. Residues His-96 and Asp-126 each act as charge relay system in the active site. A substrate-binding site is contributed by Thr-184. Residue Ser-201 is the Charge relay system of the active site. Residue 259–264 (IGIGGR) coordinates substrate. The 46-residue stretch at 281-326 (GIVVNEVSPDGPAANAGIQVNDLIISVDNKPAISALETMDQVAEIR) folds into the PDZ domain. Residue Tyr-351 coordinates substrate.

Belongs to the peptidase S1C family. As to quaternary structure, homotrimer.

The protein localises to the cell inner membrane. The enzyme catalyses Acts on substrates that are at least partially unfolded. The cleavage site P1 residue is normally between a pair of hydrophobic residues, such as Val-|-Val.. With respect to regulation, allosterically activated by the C-terminus of exposed OMP peptides (consensus Tyr-X-Phe-COOH); cleavage only occurs in the presence of peptides. Inhibited when RseB is bound to RseA. In terms of biological role, a site-1 protease (S1P) that cleaves the peptide bond between 'Val-148' and 'Ser-149' in RseA. Part of a regulated intramembrane proteolysis (RIP) cascade. When heat shock or other environmental stresses disrupt protein folding in the periplasm, DegS senses the accumulation of unassembled outer membrane porins (OMP) and then initiates RseA (anti sigma-E factor) degradation by cleaving its periplasmic domain, making it a substrate for subsequent cleavage by RseP. This cascade ultimately leads to the sigma-E-driven expression of a variety of factors dealing with folding stress in the periplasm and OMP assembly. Required for basal and stress-induced degradation of RseA. This Escherichia coli O157:H7 protein is Serine endoprotease DegS (degS).